The following is a 185-amino-acid chain: Peptidoglycan-recognition protein SC1a (185 aa).

The signal sequence occupies residues 1–21 (MVSKVALLLAVLVCSQYMAQG). One can recognise an N-acetylmuramoyl-L-alanine amidase domain in the interval 46 to 170 (SYAIIHHTAG…RQVSATECPG (125 aa)). Histidine 51 is a Zn(2+) binding site. Cysteine 58 and cysteine 64 are disulfide-bonded. Positions 160 and 168 each coordinate Zn(2+).

The protein belongs to the N-acetylmuramoyl-L-alanine amidase 2 family. Requires Zn(2+) as cofactor.

The protein localises to the secreted. It catalyses the reaction Hydrolyzes the link between N-acetylmuramoyl residues and L-amino acid residues in certain cell-wall glycopeptides.. In terms of biological role, N-acetylmuramyl-L-alanine amidase involved in innate immunity by degrading bacterial peptidoglycans (PGN). Plays a scavenger role by digesting biologically active PGN into biologically inactive fragments. Has no direct bacteriolytic activity. In Drosophila melanogaster (Fruit fly), this protein is Peptidoglycan-recognition protein SC1a.